Reading from the N-terminus, the 1492-residue chain is Neogenin (1492 aa).

The first 36 residues, 1–36, serve as a signal peptide directing secretion; that stretch reads MAAEREAGRLLCTSSSRRCCPPPPLLLLLPLLLLLG. Over 37-1136 the chain is Extracellular; that stretch reads RPASGAAATK…PTSPLDSNML (1100 aa). Ig-like C2-type domains are found at residues 63 to 158, 163 to 249, 254 to 347, and 352 to 437; these read PFYF…AKLT, PRFT…AELK, PEEI…AELT, and PGFL…AQLI. Residue N84 is glycosylated (N-linked (GlcNAc...) asparagine). 3 cysteine pairs are disulfide-bonded: C85/C140, C184/C232, and C281/C331. N221 is a glycosylation site (N-linked (GlcNAc...) asparagine). N337 carries N-linked (GlcNAc...) asparagine glycosylation. C373 and C421 are joined by a disulfide. Fibronectin type-III domains lie at 472–566, 572–662, 667–762, 772–862, 887–986, and 988–1085; these read APRD…TQPE, PAPN…TLSD, APQN…TFES, VPSS…RPHT, PPVG…LVPT, and PPKD…TPKA. N-linked (GlcNAc...) asparagine glycans are attached at residues N501 and N520. N670 and N746 each carry an N-linked (GlcNAc...) asparagine glycan. Residue N940 is glycosylated (N-linked (GlcNAc...) asparagine). The disordered stretch occupies residues 1072–1128; it reads GPMSEAVQFRTPKADSSDKMPNDQALGSAGKGSRLPDLGSDYKPPMSGSNSPHGSPT. The segment covering 1083 to 1092 has biased composition (basic and acidic residues); that stretch reads PKADSSDKMP. A compositionally biased stretch (polar residues) spans 1118-1128; it reads SGSNSPHGSPT. Residues 1137–1157 traverse the membrane as a helical segment; sequence LVIIVSVGVITIVVVVVIAVF. Residues 1158 to 1492 lie on the Cytoplasmic side of the membrane; it reads CTRRTTSHQK…MKDLNAITTA (335 aa). 3 disordered regions span residues 1205–1237, 1266–1300, and 1321–1396; these read PIDK…SMDS, PKMM…HSSS, and SMSL…FAVP. Phosphoserine occurs at positions 1209 and 1225. Polar residues predominate over residues 1222 to 1237; the sequence is PRNSQDITPVDNSMDS. At T1229 the chain carries Phosphothreonine. Polar residues-rich tracts occupy residues 1321–1353 and 1361–1380; these read SMSL…TCCT and ATSS…QSLP. S1432 bears the Phosphoserine mark. Position 1435 is a phosphothreonine (T1435). Residues S1463, S1465, and S1466 each carry the phosphoserine modification.

The protein belongs to the immunoglobulin superfamily. DCC family. As to quaternary structure, interacts with BMP2, BMP4, BMP6, and BMP7. Interacts with RGMA and RGMB. Interacts with MYO10. As to expression, widely expressed.

It is found in the cell membrane. In terms of biological role, multi-functional cell surface receptor regulating cell adhesion in many diverse developmental processes, including neural tube and mammary gland formation, myogenesis and angiogenesis. Receptor for members of the BMP, netrin, and repulsive guidance molecule (RGM) families. Netrin-Neogenin interactions result in a chemoattractive axon guidance response and cell-cell adhesion, the interaction between NEO1/Neogenin and RGMa and RGMb induces a chemorepulsive response. The chain is Neogenin from Mus musculus (Mouse).